A 407-amino-acid polypeptide reads, in one-letter code: Ran GTPase-activating protein 1 (407 aa).

LRR repeat units lie at residues E11–A39, A40–A67, E68–L101, P102–A133, H134–N166, K167–L197, K198–G226, L227–P256, T257–T285, E286–M315, and E316–K346. Residues D353–E378 are disordered. S360 carries the post-translational modification Phosphoserine.

Belongs to the RNA1 family.

It localises to the cytoplasm. Functionally, GTPase activator for the nuclear Ras-related regulatory protein GSP1 (Ran), converting it to the putatively inactive GDP-bound state. The protein is Ran GTPase-activating protein 1 (RNA1) of Saccharomyces cerevisiae (strain ATCC 204508 / S288c) (Baker's yeast).